An 843-amino-acid polypeptide reads, in one-letter code: Elongation factor 2 (843 aa).

The 328-residue stretch at H17 to H344 folds into the tr-type G domain. GTP is bound by residues A26–S33 and N158–D161. H700 is subject to Diphthamide. A Phosphoserine modification is found at S837.

It belongs to the TRAFAC class translation factor GTPase superfamily. Classic translation factor GTPase family. As to quaternary structure, may interact with glutaredoxins (Grxs). Expressed in root, stem, leaves, flowers and siliques.

The protein localises to the cytoplasm. It carries out the reaction GTP + H2O = GDP + phosphate + H(+). It participates in protein biosynthesis; polypeptide chain elongation. Functionally, catalyzes the GTP-dependent ribosomal translocation step during translation elongation. During this step, the ribosome changes from the pre-translocational (PRE) to the post-translocational (POST) state as the newly formed A-site-bound peptidyl-tRNA and P-site-bound deacylated tRNA move to the P and E sites, respectively. Catalyzes the coordinated movement of the two tRNA molecules, the mRNA and conformational changes in the ribosome. Involved in cold responses leading to freezing tolerance via the induction of cold-responsive genes. The sequence is that of Elongation factor 2 from Arabidopsis thaliana (Mouse-ear cress).